The chain runs to 298 residues: GTPase Era (298 aa).

The region spanning 4 to 171 is the Era-type G domain; that stretch reads RAGFVALIGR…KEKIVSFLPE (168 aa). Positions 12–19 are G1; that stretch reads GRTNVGKS. 12 to 19 provides a ligand contact to GTP; sequence GRTNVGKS. Positions 38-42 are G2; sequence QTTRN. The segment at 59-62 is G3; that stretch reads DTPG. GTP-binding positions include 59 to 63 and 121 to 124; these read DTPGI and NKID. A G4 region spans residues 121–124; the sequence is NKID. Residues 150 to 152 are G5; sequence ISA. The KH type-2 domain maps to 202–280; it reads LEEEVPHGVY…FLQLWVKVRK (79 aa).

It belongs to the TRAFAC class TrmE-Era-EngA-EngB-Septin-like GTPase superfamily. Era GTPase family. As to quaternary structure, monomer.

It is found in the cytoplasm. The protein resides in the cell membrane. Functionally, an essential GTPase that binds both GDP and GTP, with rapid nucleotide exchange. Plays a role in 16S rRNA processing and 30S ribosomal subunit biogenesis and possibly also in cell cycle regulation and energy metabolism. This chain is GTPase Era, found in Caldanaerobacter subterraneus subsp. tengcongensis (strain DSM 15242 / JCM 11007 / NBRC 100824 / MB4) (Thermoanaerobacter tengcongensis).